The following is a 258-amino-acid chain: Type III pantothenate kinase (258 aa).

6-13 contributes to the ATP binding site; sequence DVGNTNIV. Substrate is bound by residues Y100 and 107 to 110; that span reads GADR. Residue D109 is the Proton acceptor of the active site. Position 129 (D129) interacts with K(+). T132 provides a ligand contact to ATP. T184 contacts substrate.

The protein belongs to the type III pantothenate kinase family. Homodimer. It depends on NH4(+) as a cofactor. K(+) is required as a cofactor.

The protein resides in the cytoplasm. It carries out the reaction (R)-pantothenate + ATP = (R)-4'-phosphopantothenate + ADP + H(+). It participates in cofactor biosynthesis; coenzyme A biosynthesis; CoA from (R)-pantothenate: step 1/5. Functionally, catalyzes the phosphorylation of pantothenate (Pan), the first step in CoA biosynthesis. The polypeptide is Type III pantothenate kinase (Clostridium botulinum (strain Kyoto / Type A2)).